The chain runs to 290 residues: Syntaxin-1A (290 aa).

The segment at 1-21 (MTKDRLAALQAAQSDDEDMPE) is disordered. The Cytoplasmic portion of the chain corresponds to 1–267 (MTKDRLAALQ…KYQSKARRKK (267 aa)). One can recognise a t-SNARE coiled-coil homology domain in the interval 194 to 256 (LADIEARHAD…QTATQDTKKA (63 aa)). Residues 268 to 289 (IWIAICVLIAIIILVVFLAIYL) traverse the membrane as a helical; Anchor for type IV membrane protein segment. Residue T290 is a topological domain, vesicular.

The protein belongs to the syntaxin family. (Microbial infection) Targeted and hydrolyzed by the light chain (LC) of P.bifermentans PMP1. Cleavage probably inhibits neurotransmitter release.

The protein resides in the cytoplasmic vesicle. It is found in the secretory vesicle. Its subcellular location is the synaptic vesicle membrane. In terms of biological role, plays a critical role in several secretory processes. In Anopheles gambiae (African malaria mosquito), this protein is Syntaxin-1A.